The primary structure comprises 358 residues: Methionine aminopeptidase 2 (358 aa).

Residue histidine 109 coordinates substrate. Residues aspartate 130, aspartate 141, and histidine 210 each coordinate a divalent metal cation. A substrate-binding site is contributed by histidine 218. Positions 243 and 339 each coordinate a divalent metal cation.

Belongs to the peptidase M24A family. Methionine aminopeptidase eukaryotic type 2 subfamily. Co(2+) serves as cofactor. Zn(2+) is required as a cofactor. It depends on Mn(2+) as a cofactor. The cofactor is Fe(2+).

It localises to the cytoplasm. The catalysed reaction is Release of N-terminal amino acids, preferentially methionine, from peptides and arylamides.. Cotranslationally removes the N-terminal methionine from nascent proteins. The N-terminal methionine is often cleaved when the second residue in the primary sequence is small and uncharged (Met-Ala-, Cys, Gly, Pro, Ser, Thr, or Val). This chain is Methionine aminopeptidase 2, found in Encephalitozoon intestinalis (strain ATCC 50506) (Microsporidian parasite).